A 276-amino-acid polypeptide reads, in one-letter code: Undecaprenyl-diphosphatase (276 aa).

8 helical membrane-spanning segments follow: residues 6–26 (IEIL…WLPI), 49–69 (EMFF…MFWN), 89–109 (FSLW…GILF), 117–137 (LHTP…FIVI), 151–171 (LADI…LSLI), 181–201 (IIGA…TFFL), 224–244 (AELL…VFVI), and 256–276 (FKVF…ITAI).

This sequence belongs to the UppP family.

The protein resides in the cell membrane. The enzyme catalyses di-trans,octa-cis-undecaprenyl diphosphate + H2O = di-trans,octa-cis-undecaprenyl phosphate + phosphate + H(+). In terms of biological role, catalyzes the dephosphorylation of undecaprenyl diphosphate (UPP). Confers resistance to bacitracin. In Enterococcus faecalis (Streptococcus faecalis), this protein is Undecaprenyl-diphosphatase.